Here is a 788-residue protein sequence, read N- to C-terminus: 5-methyltetrahydropteroyltriglutamate--homocysteine methyltransferase (788 aa).

Residues 24 to 27 and Lys140 contribute to the 5-methyltetrahydropteroyltri-L-glutamate site; that span reads RELK. L-homocysteine is bound by residues 463 to 465 and Glu516; that span reads IGS. L-methionine contacts are provided by residues 463–465 and Glu516; that span reads IGS. Residues 547–548 and Trp593 contribute to the 5-methyltetrahydropteroyltri-L-glutamate site; that span reads RC. Asp631 lines the L-homocysteine pocket. Asp631 is a binding site for L-methionine. Glu637 provides a ligand contact to 5-methyltetrahydropteroyltri-L-glutamate. 3 residues coordinate Zn(2+): His673, Cys675, and Glu697. Residue His726 is the Proton donor of the active site. Cys758 is a binding site for Zn(2+).

The protein belongs to the vitamin-B12 independent methionine synthase family. Zn(2+) is required as a cofactor.

The enzyme catalyses 5-methyltetrahydropteroyltri-L-glutamate + L-homocysteine = tetrahydropteroyltri-L-glutamate + L-methionine. Its pathway is amino-acid biosynthesis; L-methionine biosynthesis via de novo pathway; L-methionine from L-homocysteine (MetE route): step 1/1. Its function is as follows. Catalyzes the transfer of a methyl group from 5-methyltetrahydrofolate to homocysteine resulting in methionine formation. The polypeptide is 5-methyltetrahydropteroyltriglutamate--homocysteine methyltransferase (Rhodopseudomonas palustris (strain TIE-1)).